We begin with the raw amino-acid sequence, 323 residues long: Small ribosomal subunit protein mS35 (323 aa).

A disordered region spans residues 31–59 (PVPTPSLPERTPGNERPPRRKALPPRTEK). Positions 257–321 (SSERNILETL…YKESVKRLLN (65 aa)) form a coiled coil.

This sequence belongs to the mitochondrion-specific ribosomal protein mS35 family. As to quaternary structure, component of the mitochondrial small ribosomal subunit (mt-SSU). Mature mammalian 55S mitochondrial ribosomes consist of a small (28S) and a large (39S) subunit. The 28S small subunit contains a 12S ribosomal RNA (12S mt-rRNA) and 30 different proteins. The 39S large subunit contains a 16S rRNA (16S mt-rRNA), a copy of mitochondrial valine transfer RNA (mt-tRNA(Val)), which plays an integral structural role, and 52 different proteins.

Its subcellular location is the mitochondrion. The chain is Small ribosomal subunit protein mS35 from Homo sapiens (Human).